The chain runs to 234 residues: Orotidine 5'-phosphate decarboxylase (234 aa).

Residues D10, K31, 58–67, T121, R183, Q192, G212, and R213 contribute to the substrate site; that span reads DLKLHDIPNT. Residue K60 is the Proton donor of the active site.

It belongs to the OMP decarboxylase family. Type 1 subfamily. In terms of assembly, homodimer.

It catalyses the reaction orotidine 5'-phosphate + H(+) = UMP + CO2. Its pathway is pyrimidine metabolism; UMP biosynthesis via de novo pathway; UMP from orotate: step 2/2. Catalyzes the decarboxylation of orotidine 5'-monophosphate (OMP) to uridine 5'-monophosphate (UMP). The chain is Orotidine 5'-phosphate decarboxylase from Lysinibacillus sphaericus (strain C3-41).